Here is a 505-residue protein sequence, read N- to C-terminus: Calcium/calmodulin-dependent protein kinase kinase 1 (505 aa).

Positions 28–66 (LEEADEGPEPARNGVDPPPRARAASVIPGSASRPTPVRP) are disordered. Phosphoserine is present on residues serine 67 and serine 74. Residue arginine 78 is modified to Asymmetric dimethylarginine. Positions 84 to 105 (LGAQVGPYSTGPASHISPRSWR) are disordered. Serine 100 is subject to Phosphoserine. Threonine 108 is modified (phosphothreonine). In terms of domain architecture, Protein kinase spans 128–409 (YKLQSEIGKG…VSDIKLHPWV (282 aa)). ATP-binding positions include 134-142 (IGKGAYGVV) and lysine 157. Positions 167-189 (QYGFPRRPPPRGSQATQGGPAKQ) are RP domain. Aspartate 275 functions as the Proton acceptor in the catalytic mechanism. Residues 435 to 440 (KNSVRL) form an autoinhibitory domain region. Residues 438–463 (VRLIPSWTTVILVKSMLRKRSFGNPF) are calmodulin-binding. Serine 458, serine 475, and serine 492 each carry phosphoserine. The tract at residues 460-505 (GNPFEPQARREERSMSAPGSLLMKEGCGEGCKSPELPGVQEDEAAS) is disordered.

Belongs to the protein kinase superfamily. Ser/Thr protein kinase family. In terms of assembly, interacts with CAMK4 and calmodulin. Post-translationally, appears to be autophosphorylated in a Ca(2+)/calmodulin-dependent manner. Phosphorylated at multiple sites by PRCAKA/PKA. Phosphorylation of Ser-458 is blocked upon binding to Ca(2+)/calmodulin. In vitro, phosphorylated by CAMK1 and CAMK4. Widely expressed. Differentially expressed in various brain regions.

The protein localises to the cytoplasm. It localises to the nucleus. It carries out the reaction L-seryl-[protein] + ATP = O-phospho-L-seryl-[protein] + ADP + H(+). The enzyme catalyses L-threonyl-[protein] + ATP = O-phospho-L-threonyl-[protein] + ADP + H(+). Its activity is regulated as follows. Activated by Ca(2+)/calmodulin. Binding of calmodulin may relieve intrasteric autoinhibition. Partially inhibited upon phosphorylation by PRCAKA/PKA. May be regulated through phosphorylation by CAMK1 and CAMK4. In terms of biological role, calcium/calmodulin-dependent protein kinase that belongs to a proposed calcium-triggered signaling cascade involved in a number of cellular processes. Phosphorylates CAMK1, CAMK1D, CAMK1G and CAMK4. Involved in regulating cell apoptosis. Promotes cell survival by phosphorylating AKT1/PKB that inhibits pro-apoptotic BAD/Bcl2-antagonist of cell death. The protein is Calcium/calmodulin-dependent protein kinase kinase 1 (Camkk1) of Mus musculus (Mouse).